Reading from the N-terminus, the 314-residue chain is Malate dehydrogenase (314 aa).

NAD(+) contacts are provided by residues glycine 11–glycine 16 and aspartate 35. Positions 84 and 90 each coordinate substrate. NAD(+)-binding positions include asparagine 97 and isoleucine 120–asparagine 122. The substrate site is built by asparagine 122 and arginine 153. Residue histidine 177 is the Proton acceptor of the active site.

The protein belongs to the LDH/MDH superfamily. MDH type 3 family.

The enzyme catalyses (S)-malate + NAD(+) = oxaloacetate + NADH + H(+). Its function is as follows. Catalyzes the reversible oxidation of malate to oxaloacetate. This chain is Malate dehydrogenase, found in Rickettsia canadensis (strain McKiel).